Here is a 1113-residue protein sequence, read N- to C-terminus: Nucleoporin NUP116/NSP116 (1113 aa).

The disordered stretch occupies residues 1-35; the sequence is MFGVSRGAFPSATTQPFGSTGSTFGGQQQQQQPVA. 4 FG repeats span residues 2-3, 17-18, 24-25, and 40-41; these read FG. The segment covering 13 to 33 has biased composition (low complexity); sequence TTQPFGSTGSTFGGQQQQQQP. The interval 49 to 91 is disordered; sequence TQAPAFGNFGNQTSNSPFGMSGSTTANGTPFGQSQLTNNNASG. A GLFG 1; approximate repeat occupies 55–58; sequence GNFG. FG repeat units lie at residues 66–67, 79–80, and 94–95; these read FG. The interaction with AFG2 stretch occupies residues 92 to 172; that stretch reads SIFGGMGNNT…AGRKFGTSQN (81 aa). Positions 110 to 166 are GLE2 binding sequence (GLEBS); it reads VVPNSTAGTSIKPFTTFEEKDPTTGVINVFQSITCMPEYRNFSFEELRFQDYQAGRK. Positions 160–362 are interaction with MEX67, not KAP95; the sequence is DYQAGRKFGT…AKPASGGLFG (203 aa). FG repeat units follow at residues 167-168 and 189-190; these read FG. Residues 205–208 form a GLFG 2 repeat; the sequence is GLFG. A GLFG 3; approximate repeat occupies 214-217; that stretch reads GMFG. One copy of the GLFG 4; approximate repeat lies at 224–227; the sequence is GGFG. The GLFG 5 repeat unit spans residues 235–238; the sequence is GLFG. One copy of the FG 10 repeat lies at 249-250; the sequence is FG. 3 GLFG repeats span residues 259–262, 276–279, and 288–291; these read GLFG. The segment covering 265-279 has biased composition (low complexity); the sequence is TNNPTNGTNNTGLFG. The disordered stretch occupies residues 265-341; sequence TNNPTNGTNN…SNANANGGAF (77 aa). Over residues 280 to 304 the composition is skewed to polar residues; the sequence is QQNSNTNGGLFGQQQNSFGANNVSN. One copy of the FG 11 repeat lies at 297–298; sequence FG. The stretch at 306–309 is one GLFG 9; approximate repeat; that stretch reads GAFG. One copy of the GLFG 10; approximate repeat lies at 327 to 330; it reads GIFG. Residues 330 to 341 are compositionally biased toward low complexity; it reads GQSNANANGGAF. Residues 339 to 342 form a GLFG 11; approximate repeat; that stretch reads GAFG. One copy of the FG 12 repeat lies at 351 to 352; the sequence is FG. The stretch at 359-362 is one GLFG 12 repeat; sequence GLFG. The segment at 362 to 535 is sufficient for interaction with MEX67 and KAP95; the sequence is GQSAGSKAFG…GAKPTGFGNT (174 aa). An FG 13 repeat occupies 370–371; the sequence is FG. Positions 371–606 are disordered; it reads GMNTNPTGTT…NPASTSGGLF (236 aa). GLFG repeat units lie at residues 382–385, 395–398, 407–410, and 420–423; these read GLFG. Residues 410-438 show a composition bias toward low complexity; it reads GQNNQSQNQSGLFGQQNSSNAFGQPQQQG. Residues 431 to 432 form an FG 14 repeat; that stretch reads FG. GLFG repeat units lie at residues 439–442 and 448–451; these read GLFG. Positions 451 to 464 are enriched in polar residues; that stretch reads GQQQGASTFASGNA. Low complexity-rich tracts occupy residues 465 to 478 and 485 to 522; these read QNNS…QQQQ and GQQN…QQNN. An FG 15 repeat occupies 470-471; the sequence is FG. GLFG repeat units lie at residues 482–485 and 497–500; these read GLFG. FG repeat units lie at residues 510-511, 525-526, and 532-533; these read FG. A compositionally biased stretch (polar residues) spans 532-569; it reads FGNTSLFSNSTTNQSNGISGNNLQQQSGGLFQNKQQPA. An interaction with KAP95, not MEX67 region spans residues 536 to 732; the sequence is SLFSNSTTNQ…QSQNALQQQQ (197 aa). GLFG repeat units lie at residues 572 to 575, 585 to 588, and 604 to 607; these read GLFG. Polar residues predominate over residues 588–603; sequence GNNQVANQNNPASTSG. The stretch at 616 to 617 is one FG 19 repeat; it reads FG. One copy of the GLFG 24; approximate repeat lies at 630 to 633; that stretch reads GIFG. 3 GLFG repeats span residues 648 to 651, 665 to 668, and 683 to 686; these read GLFG. Over residues 678-691 the composition is skewed to low complexity; sequence SNGSTGLFGSNNTS. Disordered stretches follow at residues 678–736 and 868–939; these read SNGS…QQQR and SEEK…ENVA. A compositionally biased stretch (polar residues) spans 692-708; sequence QSTNAGGLFQNNTSTNT. The segment covering 719-736 has biased composition (low complexity); it reads QSMAQSQNALQQQQQQQR. S886 bears the Phosphoserine mark. Residues 916-939 are compositionally biased toward basic and acidic residues; that stretch reads NDGEDSATKHHSRNMDEENKENVA. Residues 967–1109 enclose the Peptidase S59 domain; that stretch reads NENYYISPSL…GTYVFIVNHA (143 aa). The interaction with NUP82 NPC subcomplex stretch occupies residues 967–1113; the sequence is NENYYISPSL…FIVNHAAEQT (147 aa). The interval 969 to 1108 is nucleoporin RNA-binding motif (NRM); the sequence is NYYISPSLDT…SGTYVFIVNH (140 aa).

It belongs to the nucleoporin GLFG family. In terms of assembly, component of the nuclear pore complex (NPC). NPC constitutes the exclusive means of nucleocytoplasmic transport. NPCs allow the passive diffusion of ions and small molecules and the active, nuclear transport receptor-mediated bidirectional transport of macromolecules such as proteins, RNAs, ribonucleoparticles (RNPs), and ribosomal subunits across the nuclear envelope. Due to its 8-fold rotational symmetry, all subunits are present with 8 copies or multiples thereof. NUP116 interacts with the NUP82 subcomplex and GLE2. Through its FG repeats it interacts with numerous karyopherins including KAP95, PSE1 (GSP1-GDP dependent), MEX67, and to homomeric RNA. Interacts with CEX1. Interacts (via N-terminus) with AFG2 (via N-terminus).

The protein localises to the nucleus. The protein resides in the nuclear pore complex. It is found in the nucleus membrane. Functionally, functions as a component of the nuclear pore complex (NPC). NPC components, collectively referred to as nucleoporins (NUPs), can play the role of both NPC structural components and of docking or interaction partners for transiently associated nuclear transport factors. Active directional transport is assured by both, a Phe-Gly (FG) repeat affinity gradient for these transport factors across the NPC and a transport cofactor concentration gradient across the nuclear envelope (GSP1 and GSP2 GTPases associated predominantly with GTP in the nucleus, with GDP in the cytoplasm). Plays an important role in several nuclear export and import pathways including poly(A)+ RNA, tRNA, pre-ribosome, and protein transport. By binding ATPase AFG2, promotes AFG2-mediated release of shuttling protein RLP24 from pre-60S ribosomal particles. The sequence is that of Nucleoporin NUP116/NSP116 (NUP116) from Saccharomyces cerevisiae (strain ATCC 204508 / S288c) (Baker's yeast).